A 245-amino-acid polypeptide reads, in one-letter code: Ribonuclease PH (245 aa).

Phosphate contacts are provided by residues arginine 87 and 125-127 (GTR).

Belongs to the RNase PH family. As to quaternary structure, homohexameric ring arranged as a trimer of dimers.

It carries out the reaction tRNA(n+1) + phosphate = tRNA(n) + a ribonucleoside 5'-diphosphate. Its function is as follows. Phosphorolytic 3'-5' exoribonuclease that plays an important role in tRNA 3'-end maturation. Removes nucleotide residues following the 3'-CCA terminus of tRNAs; can also add nucleotides to the ends of RNA molecules by using nucleoside diphosphates as substrates, but this may not be physiologically important. Probably plays a role in initiation of 16S rRNA degradation (leading to ribosome degradation) during starvation. The polypeptide is Ribonuclease PH (Streptomyces griseus subsp. griseus (strain JCM 4626 / CBS 651.72 / NBRC 13350 / KCC S-0626 / ISP 5235)).